Here is a 341-residue protein sequence, read N- to C-terminus: Farnesyl pyrophosphate synthase 2 (341 aa).

Residues Lys46, Arg49, and Gln85 each coordinate isopentenyl diphosphate. 2 residues coordinate Mg(2+): Asp92 and Asp96. Arg101 contributes to the dimethylallyl diphosphate binding site. An isopentenyl diphosphate-binding site is contributed by Arg102. Residues Lys189, Thr190, Gln228, Lys245, and Lys254 each contribute to the dimethylallyl diphosphate site.

The protein belongs to the FPP/GGPP synthase family. It depends on Mg(2+) as a cofactor. In terms of tissue distribution, mainly expressed in trichomes, roots and flowers, and, to a lower extent, in leaves and stems.

It localises to the cytoplasm. Its subcellular location is the nucleus. It catalyses the reaction isopentenyl diphosphate + dimethylallyl diphosphate = (2E)-geranyl diphosphate + diphosphate. The catalysed reaction is isopentenyl diphosphate + (2E)-geranyl diphosphate = (2E,6E)-farnesyl diphosphate + diphosphate. It participates in isoprenoid biosynthesis; farnesyl diphosphate biosynthesis; farnesyl diphosphate from geranyl diphosphate and isopentenyl diphosphate: step 1/1. The protein operates within sesquiterpene biosynthesis. It functions in the pathway isoprenoid biosynthesis; geranyl diphosphate biosynthesis; geranyl diphosphate from dimethylallyl diphosphate and isopentenyl diphosphate: step 1/1. Catalyzes the sequential condensation of isopentenyl pyrophosphate with the allylic pyrophosphates, dimethylallyl pyrophosphate, and then with the resultant geranylpyrophosphate to the ultimate product farnesyl pyrophosphate. This chain is Farnesyl pyrophosphate synthase 2, found in Cannabis sativa (Hemp).